The following is a 546-amino-acid chain: CTP synthase (546 aa).

The amidoligase domain stretch occupies residues 1–269 (MNPNTKIIFV…DAKLVELLNL (269 aa)). Ser-16 serves as a coordination point for CTP. Position 16 (Ser-16) interacts with UTP. ATP is bound by residues 17 to 22 (SLGKGV) and Asp-74. The Mg(2+) site is built by Asp-74 and Glu-143. CTP-binding positions include 150-152 (DIE), 190-195 (KTKPTQ), and Lys-226. UTP-binding positions include 190 to 195 (KTKPTQ) and Lys-226. Residues 294-546 (TIAMVGKYVS…IHAAVEKSNK (253 aa)) enclose the Glutamine amidotransferase type-1 domain. Residue Gly-356 coordinates L-glutamine. The active-site Nucleophile; for glutamine hydrolysis is the Cys-383. L-glutamine is bound by residues 384-387 (LGMQ), Glu-407, and Arg-474. Catalysis depends on residues His-519 and Glu-521.

The protein belongs to the CTP synthase family. As to quaternary structure, homotetramer.

The enzyme catalyses UTP + L-glutamine + ATP + H2O = CTP + L-glutamate + ADP + phosphate + 2 H(+). The catalysed reaction is L-glutamine + H2O = L-glutamate + NH4(+). It catalyses the reaction UTP + NH4(+) + ATP = CTP + ADP + phosphate + 2 H(+). It functions in the pathway pyrimidine metabolism; CTP biosynthesis via de novo pathway; CTP from UDP: step 2/2. Allosterically activated by GTP, when glutamine is the substrate; GTP has no effect on the reaction when ammonia is the substrate. The allosteric effector GTP functions by stabilizing the protein conformation that binds the tetrahedral intermediate(s) formed during glutamine hydrolysis. Inhibited by the product CTP, via allosteric rather than competitive inhibition. Catalyzes the ATP-dependent amination of UTP to CTP with either L-glutamine or ammonia as the source of nitrogen. Regulates intracellular CTP levels through interactions with the four ribonucleotide triphosphates. This chain is CTP synthase, found in Francisella philomiragia subsp. philomiragia (strain ATCC 25017 / CCUG 19701 / FSC 153 / O#319-036).